We begin with the raw amino-acid sequence, 880 residues long: MKKRLIAPMLLSAASLAFFAMSGSAQAAAYTDYSLYKVEPSNTFSTESQASQAVAKLEKDTGWDASYQASGTTTTYQISASGIHSESEAKAILSGLAKQTSITGTSSPVGSKQPYVTISSGAISGEKQANTILAKLKQETGVAGAVKAYGAAQPYMNVMTSDIADETKVKALIQSLAKQTGIKSSYQPITHTVSVTTIQSGTIVGDSRAAQIKNAFQKESGLQASLKETVKGQAYYTFTTAAISGEANAKTLLQQLKQSTGITGSYKSINQKTTVESYNVQSAYFKGLSTVKDAISQIKKNTGVSGSYQQVGKSTSYTVNMKGITKQQLQKIDTFFKKKKWHYTSSSVKKTTTSAAYQITTAKILGEQQANKAAAFFAQKKVKAAKTAAGSTAENQYQLISEETSDQAKVTKGLNILKKNQLSASAKSVKKQIADTFKITTESLLDQTKVNQALTFFKSNHISVASQKTGQTAASSYQITTEAIISQEEIDRVLTFFKQNHIAVTTSKTGQTAYTQYKIVTTQLSSKTALNNGLTYLKSKSVTPSYTTKSNTLYKISVNEQFTGNDTAAAASTKLKQLYGWTSSIVKIKNGPQIMKTNYNLSLRDMVQKQMTVSPQTDGAAYVSLTYINTATSTVTADVLNIRSTPEVSPTNVIGQFKKGDKVKVIGQINGWAKINLGWRNASSDEVVQYVDPNNFSRDSKYYFQFLKLSQTAGLSVTEVNQKVLAGKGILTGRAKAFIDAANQYSINELYLISHALLETGNGTSALANGLTYNGKTVYNMYGIGAYDSNPNYYGAKYAYEQGWFTPEAAIIGGAKFIGSSYIHNTAYNQDTLYKMRWSATATHQYATDIGWAYKQVNRMYSLYSLLDGYTLYFDVPEYR.

An N-terminal signal peptide occupies residues 1 to 27 (MKKRLIAPMLLSAASLAFFAMSGSAQA). SPOR domains lie at 70 to 149 (SGTT…VKAY), 150 to 229 (GAAQ…LKET), and 230 to 311 (VKGQ…YQQV). 2 tandem repeats follow at residues 439-473 (ITTE…GQTA) and 479-513 (ITTE…GQTA). An SH3b domain is found at 630-700 (TATSTVTADV…VDPNNFSRDS (71 aa)).

Belongs to the glycosyl hydrolase 73 family. Homodimer.

The protein localises to the secreted. The protein resides in the cell wall. The catalysed reaction is an N(4)-(oligosaccharide-(1-&gt;3)-[oligosaccharide-(1-&gt;6)]-beta-D-Man-(1-&gt;4)-beta-D-GlcNAc-(1-&gt;4)-alpha-D-GlcNAc)-L-asparaginyl-[protein] + H2O = an oligosaccharide-(1-&gt;3)-[oligosaccharide-(1-&gt;6)]-beta-D-Man-(1-&gt;4)-D-GlcNAc + N(4)-(N-acetyl-beta-D-glucosaminyl)-L-asparaginyl-[protein]. With respect to regulation, inhibited by diethyl pyrocarbonate, slightly by EDTA. Not inhibited by PMSF, diisopropyl fluorophosphate, 2-mercaptoethanol or N-ethylmaleimide. Functionally, cell wall hydrolase not involved in cell autolysis, competence, sporulation or germination. It hydrolyzes the beta-1,4 glycan bond between the N-acetylglucosaminyl and the N-acetylmuramoyl residues in the glycan chain. The chain is Beta-N-acetylglucosaminidase (lytD) from Bacillus subtilis (strain 168).